Here is a 304-residue protein sequence, read N- to C-terminus: Aspartate carbamoyltransferase catalytic subunit (304 aa).

Carbamoyl phosphate contacts are provided by Arg-54 and Thr-55. Residue Lys-83 coordinates L-aspartate. Arg-104, His-132, and Gln-135 together coordinate carbamoyl phosphate. L-aspartate contacts are provided by Arg-165 and Arg-226. Residues Leu-265 and Pro-266 each coordinate carbamoyl phosphate.

It belongs to the aspartate/ornithine carbamoyltransferase superfamily. ATCase family. In terms of assembly, heterooligomer of catalytic and regulatory chains.

It catalyses the reaction carbamoyl phosphate + L-aspartate = N-carbamoyl-L-aspartate + phosphate + H(+). Its pathway is pyrimidine metabolism; UMP biosynthesis via de novo pathway; (S)-dihydroorotate from bicarbonate: step 2/3. Catalyzes the condensation of carbamoyl phosphate and aspartate to form carbamoyl aspartate and inorganic phosphate, the committed step in the de novo pyrimidine nucleotide biosynthesis pathway. This is Aspartate carbamoyltransferase catalytic subunit from Pyrobaculum islandicum (strain DSM 4184 / JCM 9189 / GEO3).